The sequence spans 360 residues: LETM1 domain-containing protein 1 (360 aa).

The required and sufficient for mitochondrial import stretch occupies residues 1–110 (MALSRVCWAR…KKARRIKTNM (110 aa)). Residues 1–137 (MALSRVCWAR…LRQFRRDVTK (137 aa)) lie on the Cytoplasmic side of the membrane. A helical membrane pass occupies residues 138–158 (CLFLGILSIPPFANYLVFLLM). At 159–360 (YLFPRQLLIR…LSINYVGSRR (202 aa)) the chain is on the mitochondrial intermembrane side. In terms of domain architecture, Letm1 RBD spans 186 to 360 (LRKQSHPEIL…LSINYVGSRR (175 aa)).

As to quaternary structure, interacts with BRI3BP. Interacts (via C-terminal) with SMARCA4; the interaction regulates transcriptional expression of thermogenic genes in brown adipose tissue.

It is found in the mitochondrion outer membrane. The protein localises to the nucleus. It localises to the mitochondrion inner membrane. In terms of biological role, plays an essential role for mitochondrial structure and function, as well as thermogenesis of brown adipocytes. In brown adipose tissue also localizes in the nucleus where it interacts with the chromatin remodeler SMARCA4 to regulate thermogenic genes expression, such as UCP1. May regulate phagocytosis and inflammatory responses to lipopolysaccharide in macrophages. Involved in tumorigenesis and may function as a negative regulator of the p53/TP53. The sequence is that of LETM1 domain-containing protein 1 from Bos taurus (Bovine).